The sequence spans 316 residues: Glutathione synthetase (316 aa).

In terms of domain architecture, ATP-grasp spans Lys125–Glu310. Residue Trp151–Gly207 coordinates ATP. Mg(2+)-binding residues include Glu281 and Asn283.

It belongs to the prokaryotic GSH synthase family. Mg(2+) is required as a cofactor. Mn(2+) serves as cofactor.

The catalysed reaction is gamma-L-glutamyl-L-cysteine + glycine + ATP = glutathione + ADP + phosphate + H(+). It functions in the pathway sulfur metabolism; glutathione biosynthesis; glutathione from L-cysteine and L-glutamate: step 2/2. This Escherichia coli O6:H1 (strain CFT073 / ATCC 700928 / UPEC) protein is Glutathione synthetase.